A 205-amino-acid polypeptide reads, in one-letter code: Glycerol-3-phosphate acyltransferase (205 aa).

The next 4 membrane-spanning stretches (helical) occupy residues 4-24 (IAPG…AILV), 80-100 (PFWL…PIFF), 112-132 (FGAI…TWLL), and 138-158 (GYSS…VWWF).

This sequence belongs to the PlsY family. As to quaternary structure, probably interacts with PlsX.

It is found in the cell inner membrane. The catalysed reaction is an acyl phosphate + sn-glycerol 3-phosphate = a 1-acyl-sn-glycero-3-phosphate + phosphate. It participates in lipid metabolism; phospholipid metabolism. In terms of biological role, catalyzes the transfer of an acyl group from acyl-phosphate (acyl-PO(4)) to glycerol-3-phosphate (G3P) to form lysophosphatidic acid (LPA). This enzyme utilizes acyl-phosphate as fatty acyl donor, but not acyl-CoA or acyl-ACP. This chain is Glycerol-3-phosphate acyltransferase, found in Cronobacter sakazakii (strain ATCC BAA-894) (Enterobacter sakazakii).